The following is a 328-amino-acid chain: Beta-ketoacyl-[acyl-carrier-protein] synthase III (328 aa).

Active-site residues include Cys122 and His255. The ACP-binding stretch occupies residues 256–260; the sequence is QANVR. Asn285 is an active-site residue.

This sequence belongs to the thiolase-like superfamily. FabH family. Homodimer.

Its subcellular location is the cytoplasm. The enzyme catalyses malonyl-[ACP] + acetyl-CoA + H(+) = 3-oxobutanoyl-[ACP] + CO2 + CoA. Its pathway is lipid metabolism; fatty acid biosynthesis. Functionally, catalyzes the condensation reaction of fatty acid synthesis by the addition to an acyl acceptor of two carbons from malonyl-ACP. Catalyzes the first condensation reaction which initiates fatty acid synthesis and may therefore play a role in governing the total rate of fatty acid production. Possesses both acetoacetyl-ACP synthase and acetyl transacylase activities. Its substrate specificity determines the biosynthesis of branched-chain and/or straight-chain of fatty acids. The sequence is that of Beta-ketoacyl-[acyl-carrier-protein] synthase III from Bordetella pertussis (strain Tohama I / ATCC BAA-589 / NCTC 13251).